A 64-amino-acid polypeptide reads, in one-letter code: MVTKVKCPTCKTELEWGPQSPFRPFCSKRCQLIDLGEWADEEKRIPGPINPDLLPYPDEGEQWQ.

Zn(2+) is bound by residues cysteine 7, cysteine 10, cysteine 26, and cysteine 30. The disordered stretch occupies residues 43-64 (KRIPGPINPDLLPYPDEGEQWQ).

Belongs to the DNA gyrase inhibitor YacG family. In terms of assembly, interacts with GyrB. It depends on Zn(2+) as a cofactor.

In terms of biological role, inhibits all the catalytic activities of DNA gyrase by preventing its interaction with DNA. Acts by binding directly to the C-terminal domain of GyrB, which probably disrupts DNA binding by the gyrase. The chain is DNA gyrase inhibitor YacG from Aeromonas salmonicida (strain A449).